We begin with the raw amino-acid sequence, 86 residues long: Probable protein BRICK1 (86 aa).

Positions 47–81 (EATTKSKLASLNEKLDILERKLEVLEVQVSSATTN) form a coiled coil.

It belongs to the BRK1 family. As to quaternary structure, binds SCAR.

Its subcellular location is the cytoplasm. It localises to the cytoskeleton. Its function is as follows. Involved in regulation of actin and microtubule organization. Part of a WAVE complex that activates the Arp2/3 complex. This is Probable protein BRICK1 from Oryza sativa subsp. japonica (Rice).